A 368-amino-acid polypeptide reads, in one-letter code: Histidinol-phosphate aminotransferase (368 aa).

An N6-(pyridoxal phosphate)lysine modification is found at lysine 228.

This sequence belongs to the class-II pyridoxal-phosphate-dependent aminotransferase family. Histidinol-phosphate aminotransferase subfamily. Homodimer. Pyridoxal 5'-phosphate serves as cofactor.

It carries out the reaction L-histidinol phosphate + 2-oxoglutarate = 3-(imidazol-4-yl)-2-oxopropyl phosphate + L-glutamate. Its pathway is amino-acid biosynthesis; L-histidine biosynthesis; L-histidine from 5-phospho-alpha-D-ribose 1-diphosphate: step 7/9. The protein is Histidinol-phosphate aminotransferase (hisC) of Methylobacillus flagellatus.